Here is a 245-residue protein sequence, read N- to C-terminus: Thiopurine S-methyltransferase (245 aa).

Residue Ser14 is modified to Phosphoserine. 29-40 (WQDKWVNGKTAF) is a binding site for S-adenosyl-L-methionine. Phe40 lines the substrate pocket. Lys58 is modified (N6-acetyllysine). Residues Leu69, Glu90, 134–135 (SI), and Arg152 contribute to the S-adenosyl-L-methionine site.

It belongs to the class I-like SAM-binding methyltransferase superfamily. TPMT family. As to quaternary structure, monomer.

Its subcellular location is the cytoplasm. It catalyses the reaction S-adenosyl-L-methionine + a thiopurine = S-adenosyl-L-homocysteine + a thiopurine S-methylether.. This chain is Thiopurine S-methyltransferase (TPMT), found in Chlorocebus aethiops (Green monkey).